The following is a 172-amino-acid chain: DNA-directed RNA polymerase II subunit RPB7 (172 aa).

This sequence belongs to the eukaryotic RPB7/RPC8 RNA polymerase subunit family. Component of the RNA polymerase II (Pol II) complex consisting of 12 subunits. RPB4 and RPB7 form a subcomplex that protrudes from the 10-subunit Pol II core complex.

The protein localises to the nucleus. DNA-dependent RNA polymerase catalyzes the transcription of DNA into RNA using the four ribonucleoside triphosphates as substrates. Component of RNA polymerase II which synthesizes mRNA precursors and many functional non-coding RNAs. Pol II is the central component of the basal RNA polymerase II transcription machinery. It is composed of mobile elements that move relative to each other. RPB7 is part of a subcomplex with RPB4 that binds to a pocket formed by RPB1, RPB2 and RPB6 at the base of the clamp element. The RPB4-RPB7 subcomplex seems to lock the clamp via RPB7 in the closed conformation thus preventing double-stranded DNA to enter the active site cleft. The RPB4-RPB7 subcomplex binds single-stranded DNA and RNA. The polypeptide is DNA-directed RNA polymerase II subunit RPB7 (polr2g) (Danio rerio (Zebrafish)).